The primary structure comprises 258 residues: Apolipoprotein E (258 aa).

An N-terminal signal peptide occupies residues 1-19 (MRVWTVLLGAVLLLAACQA). 3 tandem repeats follow at residues 112–133 (VDMEEAKTRVQQYLGEARQVAG), 134–155 (QNLEDVRSRVGTYLRKLRKRLA), and 156–173 (KDTEELRRKLEAYSKEAT). The 3 X 22 AA approximate tandem repeats stretch occupies residues 112–173 (VDMEEAKTRV…KLEAYSKEAT (62 aa)).

It belongs to the apolipoprotein A1/A4/E family. In terms of assembly, homotetramer.

It is found in the secreted. The protein localises to the extracellular space. It localises to the extracellular matrix. Functionally, APOE is an apolipoprotein, a protein associating with lipid particles, that mainly functions in lipoprotein-mediated lipid transport between organs via the plasma and interstitial fluids. APOE is a core component of plasma lipoproteins and is involved in their production, conversion and clearance. Apolipoproteins are amphipathic molecules that interact both with lipids of the lipoprotein particle core and the aqueous environment of the plasma. The sequence is that of Apolipoprotein E (APOE) from Alligator mississippiensis (American alligator).